A 219-amino-acid chain; its full sequence is PKHD-type hydroxylase Plav_0037 (219 aa).

A Fe2OG dioxygenase domain is found at 78-172; the sequence is NFIRILLSRY…RRAAVGWIRS (95 aa). Fe cation-binding residues include H96, D98, and H153. R163 contributes to the 2-oxoglutarate binding site.

It depends on Fe(2+) as a cofactor. L-ascorbate is required as a cofactor.

This chain is PKHD-type hydroxylase Plav_0037, found in Parvibaculum lavamentivorans (strain DS-1 / DSM 13023 / NCIMB 13966).